We begin with the raw amino-acid sequence, 360 residues long: Aminomethyltransferase (360 aa).

This sequence belongs to the GcvT family. In terms of assembly, the glycine cleavage system is composed of four proteins: P, T, L and H.

It catalyses the reaction N(6)-[(R)-S(8)-aminomethyldihydrolipoyl]-L-lysyl-[protein] + (6S)-5,6,7,8-tetrahydrofolate = N(6)-[(R)-dihydrolipoyl]-L-lysyl-[protein] + (6R)-5,10-methylene-5,6,7,8-tetrahydrofolate + NH4(+). Functionally, the glycine cleavage system catalyzes the degradation of glycine. This Exiguobacterium sibiricum (strain DSM 17290 / CCUG 55495 / CIP 109462 / JCM 13490 / 255-15) protein is Aminomethyltransferase.